The primary structure comprises 195 residues: NADH-quinone oxidoreductase subunit I (195 aa).

4Fe-4S ferredoxin-type domains lie at 44 to 74 (LNRY…VEGA) and 90 to 119 (QVYQ…MTNE). Residues C54, C57, C60, C64, C99, C102, C105, and C109 each coordinate [4Fe-4S] cluster. Residues 145-195 (MTAPPHALRPGTTQDDYYRGDITAVPEQAAPEQAAPEQPAPEREPNPETEK) are disordered. A compositionally biased stretch (low complexity) spans 168–181 (AVPEQAAPEQAAPE). Over residues 184–195 (APEREPNPETEK) the composition is skewed to basic and acidic residues.

It belongs to the complex I 23 kDa subunit family. In terms of assembly, NDH-1 is composed of 14 different subunits. Subunits NuoA, H, J, K, L, M, N constitute the membrane sector of the complex. [4Fe-4S] cluster is required as a cofactor.

The protein localises to the cell membrane. It carries out the reaction a quinone + NADH + 5 H(+)(in) = a quinol + NAD(+) + 4 H(+)(out). Functionally, NDH-1 shuttles electrons from NADH, via FMN and iron-sulfur (Fe-S) centers, to quinones in the respiratory chain. The immediate electron acceptor for the enzyme in this species is believed to be ubiquinone. Couples the redox reaction to proton translocation (for every two electrons transferred, four hydrogen ions are translocated across the cytoplasmic membrane), and thus conserves the redox energy in a proton gradient. The polypeptide is NADH-quinone oxidoreductase subunit I (Rhodococcus erythropolis (strain PR4 / NBRC 100887)).